The following is a 686-amino-acid chain: Acyl-CoA synthetase short-chain family member 3, mitochondrial (686 aa).

The N-terminal 29 residues, 1–29 (MKPSWLQCRKVTGAGGLGGSLPASSPARG), are a transit peptide targeting the mitochondrion. 226-229 (EPGR) serves as a coordination point for CoA. ATP is bound by residues 424–426 (GER) and 445–450 (DHWWQT). Lys-517 bears the N6-succinyllysine mark. The residue at position 523 (Lys-523) is an N6-acetyllysine. Residues Asp-538, Arg-553, and Arg-564 each coordinate ATP. Arg-623 is a CoA binding site.

It belongs to the ATP-dependent AMP-binding enzyme family.

It is found in the mitochondrion matrix. The catalysed reaction is acetate + ATP + CoA = acetyl-CoA + AMP + diphosphate. It carries out the reaction propanoate + ATP + CoA = propanoyl-CoA + AMP + diphosphate. The enzyme catalyses butanoate + ATP + CoA = butanoyl-CoA + AMP + diphosphate. Functionally, catalyzes the synthesis of acetyl-CoA from short-chain fatty acids. Propionate is the preferred substrate but can also utilize acetate and butyrate with a much lower affinity. This chain is Acyl-CoA synthetase short-chain family member 3, mitochondrial (ACSS3), found in Bos taurus (Bovine).